Here is a 471-residue protein sequence, read N- to C-terminus: Eremophilane O-acetyltransferase ORF8 (471 aa).

It belongs to the fumigaclavine B O-acetyltransferase family. As to quaternary structure, monomer.

It participates in sesquiterpene biosynthesis. Functionally, O-acetyltransferase; part of the gene cluster that mediates the biosynthesis of PR-toxin, a bicyclic sesquiterpene belonging to the eremophilane class and acting as a mycotoxin. The first step of the pathway is catalyzed by the aristolochene synthase which performs the cyclization of trans,trans-farnesyl diphosphate (FPP) to the bicyclic sesquiterpene aristolochene. Following the formation of aristolochene, the non-oxygenated aristolochene is converted to the trioxygenated intermediate eremofortin B, via 7-epi-neopetasone. This conversion appears to involve three enzymes, a hydroxysterol oxidase-like enzyme, the quinone-oxidase prx3 that forms the quinone-type-structure in the bicyclic nucleus of aristolochene with the C8-oxo group and the C-3 hydroxyl group, and the P450 monooxygenase ORF6 that introduces the epoxide at the double bond between carbons 1 and 2. No monoxy or dioxy-intermediates have been reported to be released to the broth, so these three early oxidative reactions may be coupled together. Eremofortin B is further oxidized by another P450 monooxygenase, that introduces a second epoxide between carbons 7 and 11 prior to acetylation to eremofortin A by the acetyltransferase ORF8. The second epoxidation may be performed by a second P450 monooxygenase. After the acetylation step, eremofortin A is converted to eremofortin C and then to PR-toxin. First the conversion of eremofortin A to eremofortin C proceeds by oxidation of the side chain of the molecule at C-12 and is catalyzed by the short-chain oxidoreductase prx1. The cytochrome P450 monooxygenase ORF6 is probably also involved in this step. The primary alcohol formed at C-12 is finally oxidized by the short-chain alcohol dehydrogenase prx4 that forms PR-toxin. The sequence is that of Eremophilane O-acetyltransferase ORF8 from Penicillium roqueforti (strain FM164).